The primary structure comprises 795 residues: Protocadherin beta-4 (795 aa).

A signal peptide spans 1-27; it reads MKKLGRIHPNRQVLAFILMVFLSQVRL. Over 28–689 the chain is Extracellular; sequence EPIRYSVLEE…AQADSLTVYL (662 aa). 5 Cadherin domains span residues 34 to 132, 137 to 241, 246 to 346, 351 to 450, and 455 to 560; these read VLEE…SPIF, VLLK…APEF, YGVQ…PPEL, LTSS…APAF, and YTLF…SPFV. Residue Asn183 is glycosylated (N-linked (GlcNAc...) asparagine). N-linked (GlcNAc...) asparagine glycans are attached at residues Asn417 and Asn435. A glycan (N-linked (GlcNAc...) asparagine) is linked at Asn566. Residues 567–670 enclose the Cadherin 6 domain; sequence GSAPCTELVP…LVDGFSQPYL (104 aa). Residues 690–710 traverse the membrane as a helical segment; it reads VVALASVSSLFLFSVLLFVAV. The Cytoplasmic segment spans residues 711–795; that stretch reads RLCRRSRAAS…PKFRNSLVFS (85 aa).

Its subcellular location is the cell membrane. Potential calcium-dependent cell-adhesion protein. May be involved in the establishment and maintenance of specific neuronal connections in the brain. The sequence is that of Protocadherin beta-4 (PCDHB4) from Homo sapiens (Human).